The following is a 215-amino-acid chain: Phosphatidylserine decarboxylase proenzyme (215 aa).

S181 serves as the catalytic Schiff-base intermediate with substrate; via pyruvic acid. S181 is subject to Pyruvic acid (Ser); by autocatalysis.

It belongs to the phosphatidylserine decarboxylase family. PSD-A subfamily. Heterodimer of a large membrane-associated beta subunit and a small pyruvoyl-containing alpha subunit. Pyruvate serves as cofactor. In terms of processing, is synthesized initially as an inactive proenzyme. Formation of the active enzyme involves a self-maturation process in which the active site pyruvoyl group is generated from an internal serine residue via an autocatalytic post-translational modification. Two non-identical subunits are generated from the proenzyme in this reaction, and the pyruvate is formed at the N-terminus of the alpha chain, which is derived from the carboxyl end of the proenzyme. The post-translation cleavage follows an unusual pathway, termed non-hydrolytic serinolysis, in which the side chain hydroxyl group of the serine supplies its oxygen atom to form the C-terminus of the beta chain, while the remainder of the serine residue undergoes an oxidative deamination to produce ammonia and the pyruvoyl prosthetic group on the alpha chain.

The protein localises to the cell membrane. The enzyme catalyses a 1,2-diacyl-sn-glycero-3-phospho-L-serine + H(+) = a 1,2-diacyl-sn-glycero-3-phosphoethanolamine + CO2. It participates in phospholipid metabolism; phosphatidylethanolamine biosynthesis; phosphatidylethanolamine from CDP-diacylglycerol: step 2/2. Its function is as follows. Catalyzes the formation of phosphatidylethanolamine (PtdEtn) from phosphatidylserine (PtdSer). The protein is Phosphatidylserine decarboxylase proenzyme of Polynucleobacter asymbioticus (strain DSM 18221 / CIP 109841 / QLW-P1DMWA-1) (Polynucleobacter necessarius subsp. asymbioticus).